The chain runs to 39 residues: Photosystem I reaction center subunit IX (39 aa).

The chain crosses the membrane as a helical span at residues 7 to 27 (FLTTAPVAFILFSSFVFALFI).

It belongs to the PsaJ family.

The protein localises to the cellular thylakoid membrane. In terms of biological role, may help in the organization of the PsaE and PsaF subunits. In Synechococcus sp. (strain JA-2-3B'a(2-13)) (Cyanobacteria bacterium Yellowstone B-Prime), this protein is Photosystem I reaction center subunit IX.